We begin with the raw amino-acid sequence, 786 residues long: LPS-assembly protein LptD (786 aa).

The first 39 residues, 1–39 (MPPKPLFPNVFPGDGAPRKRRLALALLAVPGLVPAVSYA), serve as a signal peptide directing secretion. The interval 767–786 (PGYTPLPPPPPPMSRFSNYE) is disordered. Residues 770-779 (TPLPPPPPPM) show a composition bias toward pro residues.

The protein belongs to the LptD family. In terms of assembly, component of the lipopolysaccharide transport and assembly complex. Interacts with LptE and LptA.

It localises to the cell outer membrane. Functionally, together with LptE, is involved in the assembly of lipopolysaccharide (LPS) at the surface of the outer membrane. This is LPS-assembly protein LptD from Burkholderia lata (strain ATCC 17760 / DSM 23089 / LMG 22485 / NCIMB 9086 / R18194 / 383).